We begin with the raw amino-acid sequence, 250 residues long: Putative ankyrin repeat protein RBE_0623 (250 aa).

ANK repeat units follow at residues 70-99, 104-134, and 137-166; these read IGDS…EPNT, NCYT…NINE, and GKET…PDKF.

In Rickettsia bellii (strain RML369-C), this protein is Putative ankyrin repeat protein RBE_0623.